Consider the following 145-residue polypeptide: Leghemoglobin (145 aa).

The 143-residue stretch at 3-145 folds into the Globin domain; the sequence is GFTEKQEALV…ELAAALKKAF (143 aa). Residues tyrosine 26 and tyrosine 31 each carry the nitrated tyrosine modification. Histidine 62 contributes to the O2 binding site. The heme b site is built by lysine 65, histidine 93, and lysine 96. Nitrated tyrosine is present on tyrosine 134.

The protein belongs to the plant globin family. As to quaternary structure, monomer. In terms of processing, nitrated in effective nodules and particularly in hypoxic conditions; this mechanism may play a protective role in the symbiosis by buffering toxic peroxynitrite NO(2)(-). Nitration level decrease during nodule senescence. In terms of tissue distribution, root nodules.

The protein localises to the cytoplasm. It is found in the cytosol. It localises to the nucleus. In terms of biological role, leghemoglobin that reversibly binds oxygen O(2) through a pentacoordinated heme iron. In root nodules, facilitates the diffusion of oxygen to the bacteroids while preventing the bacterial nitrogenase from being inactivated by buffering dioxygen, nitric oxide and carbon monoxide, and promoting the formation of reactive oxygen species (ROS, e.g. H(2)O(2)). This role is essential for symbiotic nitrogen fixation (SNF). In Psophocarpus tetragonolobus (Winged bean), this protein is Leghemoglobin.